The primary structure comprises 419 residues: UDP-N-acetylglucosamine 1-carboxyvinyltransferase (419 aa).

22–23 (KN) provides a ligand contact to phosphoenolpyruvate. Arginine 91 is a binding site for UDP-N-acetyl-alpha-D-glucosamine. Cysteine 115 (proton donor) is an active-site residue. The residue at position 115 (cysteine 115) is a 2-(S-cysteinyl)pyruvic acid O-phosphothioketal. UDP-N-acetyl-alpha-D-glucosamine is bound by residues 120-124 (RPVDL), 160-163 (KVSV), aspartate 305, and valine 327.

The protein belongs to the EPSP synthase family. MurA subfamily.

It is found in the cytoplasm. It catalyses the reaction phosphoenolpyruvate + UDP-N-acetyl-alpha-D-glucosamine = UDP-N-acetyl-3-O-(1-carboxyvinyl)-alpha-D-glucosamine + phosphate. The protein operates within cell wall biogenesis; peptidoglycan biosynthesis. Functionally, cell wall formation. Adds enolpyruvyl to UDP-N-acetylglucosamine. In Salmonella arizonae (strain ATCC BAA-731 / CDC346-86 / RSK2980), this protein is UDP-N-acetylglucosamine 1-carboxyvinyltransferase.